The following is a 2301-amino-acid chain: Genome polyprotein (2301 aa).

The segment at 3–14 (CKHGYPDVCPIC) is a zinc-finger region. Residues 30–46 (DGEWFPTDLLCVDLDDD) are acidic. The theilo stretch occupies residues 60 to 73 (MEWTDLPLVRDIVM). A lipid anchor (N-myristoyl glycine; by host) is attached at Gly-77. An intrachain disulfide couples Cys-501 to Cys-503. The interval 1039–1045 (YYKQRLI) is host EIF4E binding. The region spanning 1281–1446 (IPLASLCEKF…CTTSNGMLDI (166 aa)) is the SF3 helicase domain. 1310-1317 (GAAGQGKS) is a binding site for ATP. Tyr-1606 is subject to O-(5'-phospho-RNA)-tyrosine. The region spanning 1634 to 1827 (NPVMDFELFC…AATIITRELI (194 aa)) is the Peptidase C3 domain. Residues His-1678, Asp-1712, and Cys-1791 each act as for protease 3C activity in the active site. The region spanning 2069–2187 (NYVYDVDYSN…GTNYQIDFNL (119 aa)) is the RdRp catalytic domain. Residues Asp-2075 and Asp-2173 each act as for RdRp activity in the active site.

Belongs to the picornaviruses polyprotein family. In terms of assembly, interacts with host EIF4E. Interacts with the leader protein. As to quaternary structure, interacts with host RAN; the complex L-RAN recruits cellular kinases responsible for the L-induced nucleocytoplasmic trafficking inhibition. The complex L-RAN can further bind to the host exportins XPO1/CRM1 and CSE1L/CAS. Interacts with the protein 2A. Interacts with host RNASEL; this interaction prevents RNASEL activation by its substrate 2'-5' oligoadenylates. Post-translationally, phosphorylated. In terms of processing, specific enzymatic cleavages by the viral protease in vivo yield a variety of precursors and mature proteins. The polyprotein seems to be cotranslationally cleaved at the 2A/2B junction by a ribosomal skip from one codon to the next without formation of a peptide bond. This process would release the P1-2A peptide from the translational complex. During virion maturation, immature virions are rendered infectious following cleavage of VP0 into VP4 and VP2. This maturation seems to be an autocatalytic event triggered by the presence of RNA in the capsid and is followed by a conformational change of the particle. Post-translationally, uridylylated by the polymerase and is covalently linked to the 5'-end of genomic RNA. This uridylylated form acts as a nucleotide-peptide primer for the polymerase. In terms of processing, myristoylation is required during RNA encapsidation and formation of the mature virus particle.

The protein resides in the virion. Its subcellular location is the host cytoplasm. It is found in the host nucleus. It localises to the host nucleolus. The protein localises to the host cytoplasmic vesicle membrane. The enzyme catalyses RNA(n) + a ribonucleoside 5'-triphosphate = RNA(n+1) + diphosphate. The catalysed reaction is ATP + H2O = ADP + phosphate + H(+). It catalyses the reaction Selective cleavage of Gln-|-Gly bond in the poliovirus polyprotein. In other picornavirus reactions Glu may be substituted for Gln, and Ser or Thr for Gly.. Functionally, forms a complex with host RAN and probably binds to exportins carrying activated MAPK in order to mediate the hyperphosphorylation of host Phe/Gly containing nuclear pore proteins (Nups) resulting in cessation of active nucleocytoplasmic transport. Proteins with NLS signals fail to import, cellular mRNAs fail to export, and some proteins small enough for diffusion are not retained anymore (efflux). The resulting inhibition of cellular protein synthesis serves to ensure maximal viral gene expression and to evade host immune response. The leader protein also inhibits host interferon regulatory factor 3 (IRF3) dimerization, thereby blocking the transcriptional activation of IFN genes. Binds to host RNase L thereby preventing its activation by 2'-5' oligoadenylates in order to counteract the antiviral interferon-inducible OAS/RNase L pathway. Its function is as follows. Forms an icosahedral capsid of pseudo T=3 symmetry with capsid proteins VP2 and VP3. Together they form an icosahedral capsid composed of 60 copies of each VP1, VP2, and VP3, with a diameter of approximately 300 Angstroms. VP4 lies on the inner surface of the protein shell formed by VP1, VP2 and VP3. All the three latter proteins contain a beta-sheet structure called beta-barrel jelly roll. VP1 is situated at the 12 fivefold axes, whereas VP2 and VP3 are located at the quasi-sixfold axes. In terms of biological role, lies on the inner surface of the capsid shell. After binding to the host receptor, the capsid undergoes conformational changes. Capsid protein VP4 is released, capsid protein VP1 N-terminus is externalized, and together, they shape a pore in the host membrane through which the viral genome is translocated into the host cell cytoplasm. After genome has been released, the channel shrinks. VP0 precursor is a component of immature procapsids. Functionally, involved in host translation shutoff by inhibiting cap-dependent mRNA translation. Nuclear localization is required for this function. The resulting inhibition of cellular protein synthesis serves to ensure maximal viral gene expression and to evade host immune response. Inhibits the phosphorylation of the leader protein. Its function is as follows. Affects membrane integrity and causes an increase in membrane permeability. In terms of biological role, associates with and induces structural rearrangements of intracellular membranes. It displays RNA-binding, nucleotide binding and NTPase activities. Serves as membrane anchor via its hydrophobic domain. Functionally, forms a primer, VPg-pU, which is utilized by the polymerase for the initiation of RNA chains. Its function is as follows. Cysteine protease that generates mature viral proteins from the precursor polyprotein. In addition to its proteolytic activity, it binds to viral RNA, and thus influences viral genome replication. RNA and substrate cooperatively bind to the protease. Cleaves host PABP1, this cleavage is important for viral replication. In terms of biological role, replicates the genomic and antigenomic RNAs by recognizing replications specific signals. Performs VPg uridylylation. This is Genome polyprotein from Theiler's murine encephalomyelitis virus (strain DA) (TMEV).